Here is a 213-residue protein sequence, read N- to C-terminus: Endoplasmic reticulum vesicle protein 25 (213 aa).

Residues 1-20 form the signal peptide; the sequence is MILRIPSLLYLFTLLTAVYA. The Lumenal segment spans residues 21-181; it reads VKFDLTSDRN…TNESTNQRVK (161 aa). In terms of domain architecture, GOLD spans 33 to 122; sequence PKCIWNFASA…VRSVELDVDI (90 aa). Residues 182-202 form a helical membrane-spanning segment; it reads VFSVLIICCTIGLGVWQLLHL. Residues 203–213 lie on the Cytoplasmic side of the membrane; it reads RSFFKRKYLID.

Belongs to the EMP24/GP25L family.

Its subcellular location is the endoplasmic reticulum membrane. It localises to the golgi apparatus membrane. Constituent of COPII-coated endoplasmic reticulum-derived transport vesicles. Required for efficient transport of a subset of secretory proteins to the Golgi. Facilitates retrograde transport from the Golgi to the endoplasmic reticulum. This chain is Endoplasmic reticulum vesicle protein 25 (ERV25), found in Cryptococcus neoformans var. neoformans serotype D (strain JEC21 / ATCC MYA-565) (Filobasidiella neoformans).